The chain runs to 36 residues: Mu/omega-theraphotoxin-Pmu1a (36 aa).

3 disulfides stabilise this stretch: Cys-2–Cys-16, Cys-9–Cys-21, and Cys-15–Cys-29.

This sequence belongs to the neurotoxin 10 (Hwtx-1) family. As to expression, expressed by the venom gland.

Its subcellular location is the secreted. Gating-modifier toxin that targets both voltage-gated sodium and calcium channels, with described activities on human Nav1.7/SCN9A (IC(50)=5.5-7 nM), hNav1.6/SCN10A (IC(50)=9.9 nM), hNav1.4/SCN4A (IC(50)=62.9 nM), hCav3.2/CACNA1H (IC(50)=955.4 nM or 63.5% inhibition at 10 uM), hCav3.1/CACNA1G (95.1% inhibition at 10 uM), hCav3.3/CACNA1I (90.8% inhibition at 10 uM). Acts on Cav3 currents mainly by inducing a strong depolarizing shift in the current-voltage curve. This chain is Mu/omega-theraphotoxin-Pmu1a, found in Pterinochilus murinus (Mombasa golden starburst baboon spider).